The sequence spans 478 residues: MNKHLLAKIALLSAVQLVTLSAFADVPLTPSQFAKAKSENFDKKVILSNLNKPHALLWGPDNQIWLTERATGKILRVNPESGSVKTVFQVPEIVNDADGQNGLLGFAFHPDFKNNPYIYISGTFKNPKSTDKELPNQTIIRRYTYNKSTDTLEKPVDLLAGLPSSKDHQSGRLVIGPDQKIYYTIGDQGRNQLAYLFLPNQAQHTPTQQELNGKDYHTYMGKVLRLNLDGSIPKDNPSFNGVVSHIYTLGHRNPQGLAFTPNGKLLQSEQGPNSDDEINLIVKGGNYGWPNVAGYKDDSGYAYANYSAAANKSIKDLAQNGVKVAAGVPVTKESEWTGKNFVPPLKTLYTVQDTYNYNDPTCGEMTYICWPTVAPSSAYVYKGGKKAITGWENTLLVPSLKRGVIFRIKLDPTYSTTYDDAVPMFKSNNRYRDVIASPDGNVLYVLTDTAGNVQKDDGSVTNTLENPGSLIKFTYKAK.

The first 24 residues, 1 to 24 (MNKHLLAKIALLSAVQLVTLSAFA), serve as a signal peptide directing secretion. D-glucose-binding residues include glutamine 100 and aspartate 167. Residue histidine 168 is the Proton acceptor of the active site. D-glucose is bound by residues glutamine 192 and arginine 252. A PQQ region spans residues 252–253 (RN). Residues glycine 271, proline 272, glutamate 277, tyrosine 287, alanine 293, tyrosine 295, aspartate 297, and glutamate 333 each contribute to the Ca(2+) site. The pyrroloquinoline quinone site is built by tyrosine 367, threonine 372, and lysine 401. The segment at 430 to 432 (RYR) is PQQ.

It belongs to the PQQ oxidoreductase GdhB family. As to quaternary structure, homodimer. Requires pyrroloquinoline quinone as cofactor. Ca(2+) serves as cofactor.

The enzyme catalyses a ubiquinone + D-glucose = D-glucono-1,5-lactone + a ubiquinol. Functionally, oxidizes glucose to gluconolactone. The polypeptide is Quinoprotein glucose dehydrogenase B (gdhB) (Acinetobacter calcoaceticus).